A 273-amino-acid chain; its full sequence is Formamidopyrimidine-DNA glycosylase (273 aa).

Residue Pro2 is the Schiff-base intermediate with DNA of the active site. Glu3 acts as the Proton donor in catalysis. The Proton donor; for beta-elimination activity role is filled by Lys58. DNA is bound by residues His91 and Arg110. The segment at 238 to 272 (QVYGKTGQPCPRCASMIVKIKLGGRGTHLCPHCQK) adopts an FPG-type zinc-finger fold. Arg262 acts as the Proton donor; for delta-elimination activity in catalysis.

This sequence belongs to the FPG family. As to quaternary structure, monomer. Zn(2+) is required as a cofactor.

It carries out the reaction Hydrolysis of DNA containing ring-opened 7-methylguanine residues, releasing 2,6-diamino-4-hydroxy-5-(N-methyl)formamidopyrimidine.. The catalysed reaction is 2'-deoxyribonucleotide-(2'-deoxyribose 5'-phosphate)-2'-deoxyribonucleotide-DNA = a 3'-end 2'-deoxyribonucleotide-(2,3-dehydro-2,3-deoxyribose 5'-phosphate)-DNA + a 5'-end 5'-phospho-2'-deoxyribonucleoside-DNA + H(+). In terms of biological role, involved in base excision repair of DNA damaged by oxidation or by mutagenic agents. Acts as a DNA glycosylase that recognizes and removes damaged bases. Has a preference for oxidized purines, such as 7,8-dihydro-8-oxoguanine (8-oxoG). Has AP (apurinic/apyrimidinic) lyase activity and introduces nicks in the DNA strand. Cleaves the DNA backbone by beta-delta elimination to generate a single-strand break at the site of the removed base with both 3'- and 5'-phosphates. This Streptococcus thermophilus (strain CNRZ 1066) protein is Formamidopyrimidine-DNA glycosylase.